We begin with the raw amino-acid sequence, 376 residues long: TraB domain-containing protein (376 aa).

Position 1 is an N-acetylmethionine (methionine 1). The segment at 1–34 is disordered; the sequence is MDGEEQQPPHEANVEPVVPSEASEPVPRVLSGDP. Residues 14–27 show a composition bias toward low complexity; sequence VEPVVPSEASEPVP. Threonine 65 bears the Phosphothreonine mark.

This is TraB domain-containing protein (TRABD) from Homo sapiens (Human).